The following is a 327-amino-acid chain: Undecaprenyl-phosphate 4-deoxy-4-formamido-L-arabinose transferase (327 aa).

2 helical membrane passes run 233–253 (ILSLIGSVVALSGFLLALLLI) and 268–288 (VFTLFAVLFMFIGAQFVGMGL).

It belongs to the glycosyltransferase 2 family.

The protein resides in the cell inner membrane. It catalyses the reaction UDP-4-deoxy-4-formamido-beta-L-arabinose + di-trans,octa-cis-undecaprenyl phosphate = 4-deoxy-4-formamido-alpha-L-arabinopyranosyl di-trans,octa-cis-undecaprenyl phosphate + UDP. It participates in glycolipid biosynthesis; 4-amino-4-deoxy-alpha-L-arabinose undecaprenyl phosphate biosynthesis; 4-amino-4-deoxy-alpha-L-arabinose undecaprenyl phosphate from UDP-4-deoxy-4-formamido-beta-L-arabinose and undecaprenyl phosphate: step 1/2. The protein operates within bacterial outer membrane biogenesis; lipopolysaccharide biosynthesis. Functionally, catalyzes the transfer of 4-deoxy-4-formamido-L-arabinose from UDP to undecaprenyl phosphate. The modified arabinose is attached to lipid A and is required for resistance to polymyxin and cationic antimicrobial peptides. This is Undecaprenyl-phosphate 4-deoxy-4-formamido-L-arabinose transferase from Pectobacterium atrosepticum (strain SCRI 1043 / ATCC BAA-672) (Erwinia carotovora subsp. atroseptica).